The chain runs to 326 residues: DNA-directed RNA polymerase subunit alpha (326 aa).

The alpha N-terminal domain (alpha-NTD) stretch occupies residues 1 to 232; the sequence is MQGSARDFLK…EQLSSFVELE (232 aa). The interval 246 to 326 is alpha C-terminal domain (alpha-CTD); the sequence is FDPQLLAAVD…NWPPVDLMSE (81 aa).

It belongs to the RNA polymerase alpha chain family. As to quaternary structure, homodimer. The RNAP catalytic core consists of 2 alpha, 1 beta, 1 beta' and 1 omega subunit. When a sigma factor is associated with the core the holoenzyme is formed, which can initiate transcription.

It carries out the reaction RNA(n) + a ribonucleoside 5'-triphosphate = RNA(n+1) + diphosphate. Functionally, DNA-dependent RNA polymerase catalyzes the transcription of DNA into RNA using the four ribonucleoside triphosphates as substrates. This chain is DNA-directed RNA polymerase subunit alpha, found in Vesicomyosocius okutanii subsp. Calyptogena okutanii (strain HA).